We begin with the raw amino-acid sequence, 63 residues long: U2-agatoxin-Ao1v (63 aa).

The first 14 residues, 1–14, serve as a signal peptide directing secretion; the sequence is LLLISAMVGSMIAA. Residues 15–28 constitute a propeptide that is removed on maturation; sequence VPEEESLQLSEDER. 3 disulfide bridges follow: Cys31/Cys47, Cys38/Cys52, and Cys46/Cys62.

Belongs to the neurotoxin 01 (U2-agtx) family. Expressed by the venom gland.

The protein localises to the secreted. In terms of biological role, insect active toxin causing rapid but reversible paralysis in crickets. No activity shown in mammals. Does not show effect on mammalian voltage-gated calcium channels. This is U2-agatoxin-Ao1v from Agelena orientalis (Funnel-web spider).